We begin with the raw amino-acid sequence, 453 residues long: Na(+)/H(+) antiporter NhaA (453 aa).

11 helical membrane passes run 27–47 (FLHI…SALI), 78–98 (LHFW…GMEI), 114–134 (ILPI…YFIF), 143–163 (GWAV…ALLG), 172–192 (IILL…IAFF), 201–221 (GLLI…IGLA), 222–242 (SAWL…VTGV), 316–336 (PWVA…VSFA), 346–366 (FLIV…GIIT), 385–405 (WAGI…SIFV), and 421–441 (IGVL…GFIY).

This sequence belongs to the NhaA Na(+)/H(+) (TC 2.A.33) antiporter family.

The protein localises to the cell inner membrane. The catalysed reaction is Na(+)(in) + 2 H(+)(out) = Na(+)(out) + 2 H(+)(in). In terms of biological role, na(+)/H(+) antiporter that extrudes sodium in exchange for external protons. This is Na(+)/H(+) antiporter NhaA from Bartonella tribocorum (strain CIP 105476 / IBS 506).